Consider the following 169-residue polypeptide: Transcription antitermination protein NusB (169 aa).

Residues 1–20 form a disordered region; it reads MAESSNKPFRGPVRANDRKA.

Belongs to the NusB family.

Its function is as follows. Involved in transcription antitermination. Required for transcription of ribosomal RNA (rRNA) genes. Binds specifically to the boxA antiterminator sequence of the ribosomal RNA (rrn) operons. The sequence is that of Transcription antitermination protein NusB from Bradyrhizobium sp. (strain BTAi1 / ATCC BAA-1182).